The chain runs to 229 residues: MDTKALHTLTYGLYIITAKKGDRFNGQVANTVFQITSDPPTIAVSINKQNLTHEFIQAGQGFVISVLAREVPLSLIGQFGFKSGREMDKFAGINYKLSEGGLPYLADHTLAYLEASLNQTVDAGTHSIFIGTVTDAAVLLQGEPMTYAYYHQVKRGTTPKTAPTFTVGREKDKTALASPKYQCTICNYVYDPVQGDPEHGIAPGTPFADLPEDWTCPICGAGKDAFEQI.

The flavodoxin-reductase-like stretch occupies residues 1-158 (MDTKALHTLT…YYHQVKRGTT (158 aa)). In terms of domain architecture, Rubredoxin-like spans 178-229 (SPKYQCTICNYVYDPVQGDPEHGIAPGTPFADLPEDWTCPICGAGKDAFEQI). Fe cation is bound by residues C183, C186, C216, and C219.

It in the N-terminal section; belongs to the flavodoxin reductase family. Homodimer. Fe cation is required as a cofactor. FMN serves as cofactor.

Its function is as follows. Has nitric oxide reductase activity in combination with FprA; probably involved in nitrosative stress protection. Acts as an NADH:FprA oxidoreductase. The protein is High molecular weight rubredoxin (hrb) of Moorella thermoacetica (strain ATCC 39073 / JCM 9320).